The primary structure comprises 720 residues: Inactive serine protease PAMR1 (720 aa).

A signal peptide spans methionine 1–serine 21. 8 cysteine pairs are disulfide-bonded: cysteine 128–cysteine 150, cysteine 177–cysteine 199, cysteine 239–cysteine 250, cysteine 244–cysteine 260, cysteine 262–cysteine 271, cysteine 280–cysteine 329, cysteine 315–cysteine 342, and cysteine 414–cysteine 442. One can recognise a CUB domain in the interval cysteine 128–isoleucine 236. The EGF-like domain occupies glutamate 235–glutamate 272. 2 Sushi domains span residues arginine 278–lysine 344 and alanine 387–proline 444. Positions isoleucine 445–lysine 720 constitute a Peptidase S1 domain. Asparagine 451 carries N-linked (GlcNAc...) asparagine glycosylation. Cysteine 489 and cysteine 505 are disulfide-bonded. Asparagine 614 carries N-linked (GlcNAc...) asparagine glycosylation. Intrachain disulfides connect cysteine 630-cysteine 649 and cysteine 661-cysteine 697.

The protein belongs to the peptidase S1 family.

The protein resides in the secreted. In terms of biological role, may play a role in regeneration of skeletal muscle. The polypeptide is Inactive serine protease PAMR1 (PAMR1) (Pongo abelii (Sumatran orangutan)).